A 321-amino-acid chain; its full sequence is Beta-ketoacyl-[acyl-carrier-protein] synthase III (321 aa).

Residues Cys-114 and His-248 contribute to the active site. The segment at 249–253 (QANKR) is ACP-binding. The active site involves Asn-278.

Belongs to the thiolase-like superfamily. FabH family. Homodimer.

The protein localises to the cytoplasm. It catalyses the reaction malonyl-[ACP] + acetyl-CoA + H(+) = 3-oxobutanoyl-[ACP] + CO2 + CoA. It functions in the pathway lipid metabolism; fatty acid biosynthesis. Catalyzes the condensation reaction of fatty acid synthesis by the addition to an acyl acceptor of two carbons from malonyl-ACP. Catalyzes the first condensation reaction which initiates fatty acid synthesis and may therefore play a role in governing the total rate of fatty acid production. Possesses both acetoacetyl-ACP synthase and acetyl transacylase activities. Its substrate specificity determines the biosynthesis of branched-chain and/or straight-chain of fatty acids. This chain is Beta-ketoacyl-[acyl-carrier-protein] synthase III, found in Sphingopyxis alaskensis (strain DSM 13593 / LMG 18877 / RB2256) (Sphingomonas alaskensis).